Reading from the N-terminus, the 336-residue chain is N-lysine methyltransferase KMT5A-B (336 aa).

Disordered regions lie at residues 1 to 107 (MGRG…SSKQ) and 141 to 165 (QSQK…NRKL). Positions 67–93 (SVAHHESKNLGKPTTETRKKAEVEKKR) are enriched in basic and acidic residues. Over residues 95–104 (SSATELSVKS) the composition is skewed to polar residues. Residues 146 to 162 (VKNKSQRRKAQRKKSPN) show a composition bias toward basic residues. One can recognise an SET domain in the interval 200-321 (DGMKMDMIIG…VGEELLYDYG (122 aa)). S-adenosyl-L-methionine contacts are provided by residues 210-212 (KGR), tyrosine 255, and 282-283 (NH).

It belongs to the class V-like SAM-binding methyltransferase superfamily. Histone-lysine methyltransferase family. PR/SET subfamily. In terms of processing, phosphorylated during mitosis.

It localises to the nucleus. Its subcellular location is the chromosome. The catalysed reaction is L-lysyl(20)-[histone H4] + S-adenosyl-L-methionine = N(6)-methyl-L-lysyl(20)-[histone H4] + S-adenosyl-L-homocysteine + H(+). It catalyses the reaction L-lysyl-[protein] + S-adenosyl-L-methionine = N(6)-methyl-L-lysyl-[protein] + S-adenosyl-L-homocysteine + H(+). In terms of biological role, protein-lysine N-methyltransferase that monomethylates both histones and non-histone proteins. Specifically monomethylates 'Lys-20' of histone H4 (H4K20me1). H4K20me1 is enriched during mitosis and represents a specific tag for epigenetic transcriptional repression. Mainly functions in euchromatin regions, thereby playing a central role in the silencing of euchromatic genes. Required for cell proliferation, probably by contributing to the maintenance of proper higher-order structure of DNA during mitosis. Involved in chromosome condensation and proper cytokinesis. The protein is N-lysine methyltransferase KMT5A-B of Xenopus laevis (African clawed frog).